We begin with the raw amino-acid sequence, 63 residues long: EIYFEPDFGFPPDCKVYTEACTREYNPICDSAAKTYSNECTFCNEKMNNDADIHFNHFGECEY.

The 56-residue stretch at 8-63 folds into the Kazal-like domain; it reads FGFPPDCKVYTEACTREYNPICDSAAKTYSNECTFCNEKMNNDADIHFNHFGECEY. Disulfide bonds link Cys-14–Cys-43, Cys-21–Cys-40, and Cys-29–Cys-61.

As to expression, seminal plasma.

The protein localises to the secreted. In terms of biological role, strong inhibitor of acrosin. This is Acrosin inhibitor 1 from Bos taurus (Bovine).